Consider the following 153-residue polypeptide: NADPH-dependent 7-cyano-7-deazaguanine reductase (153 aa).

The disordered stretch occupies residues 1-22 (MTDNRYDNLGQLGTSTPLPDNP). Catalysis depends on Cys51, which acts as the Thioimide intermediate. Catalysis depends on Asp58, which acts as the Proton donor. Residues 73 to 75 (VES) and 92 to 93 (HE) each bind substrate.

Belongs to the GTP cyclohydrolase I family. QueF type 1 subfamily.

The protein resides in the cytoplasm. The enzyme catalyses 7-aminomethyl-7-carbaguanine + 2 NADP(+) = 7-cyano-7-deazaguanine + 2 NADPH + 3 H(+). It participates in tRNA modification; tRNA-queuosine biosynthesis. Functionally, catalyzes the NADPH-dependent reduction of 7-cyano-7-deazaguanine (preQ0) to 7-aminomethyl-7-deazaguanine (preQ1). The chain is NADPH-dependent 7-cyano-7-deazaguanine reductase from Maricaulis maris (strain MCS10) (Caulobacter maris).